A 452-amino-acid polypeptide reads, in one-letter code: Protein CLT3, chloroplastic (452 aa).

A chloroplast-targeting transit peptide spans 1-34; the sequence is MATTSRRFTTGLFASITSVKSHSANRPQSISLIR. A run of 10 helical transmembrane segments spans residues 105–125, 137–157, 175–195, 202–222, 230–250, 258–278, 307–327, 353–373, 389–409, and 412–432; these read AEIV…RVMY, FFLA…ILYF, PFLI…AAAA, TTVL…IFLG, ILGC…GSGA, GVLW…GTVL, FQAI…GIPF, GAPF…IALL, TVSV…LGVA, and LPKG…LYSW.

Belongs to the CRT-like transporter family.

Its subcellular location is the plastid. It localises to the chloroplast membrane. Its function is as follows. Involved in thiol transport from the plastid to the cytosol. Transports probably both glutathione (GSH) and its precursor, gamma-glutamylcysteine (gamma-EC). Exhibits some functional redundancy with CLT1 in maintaining the root GSH pool. This chain is Protein CLT3, chloroplastic, found in Arabidopsis thaliana (Mouse-ear cress).